Reading from the N-terminus, the 482-residue chain is Glutamate--tRNA ligase 2 (482 aa).

A 'HIGH' region motif is present at residues 16-26; sequence PSPTGYLHLGN. C113, C115, C140, and H142 together coordinate Zn(2+). A 'KMSKS' region motif is present at residues 257–261; sequence PLSKR. K260 contributes to the ATP binding site.

Belongs to the class-I aminoacyl-tRNA synthetase family. Glutamate--tRNA ligase type 1 subfamily. In terms of assembly, monomer. Requires Zn(2+) as cofactor.

It localises to the cytoplasm. It catalyses the reaction tRNA(Glu) + L-glutamate + ATP = L-glutamyl-tRNA(Glu) + AMP + diphosphate. Functionally, catalyzes the attachment of glutamate to tRNA(Glu) in a two-step reaction: glutamate is first activated by ATP to form Glu-AMP and then transferred to the acceptor end of tRNA(Glu). This is Glutamate--tRNA ligase 2 from Acidithiobacillus ferrooxidans (strain ATCC 53993 / BNL-5-31) (Leptospirillum ferrooxidans (ATCC 53993)).